Here is a 90-residue protein sequence, read N- to C-terminus: MLKKKIIKTHANHTNDTGSTQVQVSLLSSRVAQLTKHLNNHKNDYSSQRGLKKLLGQRKRLLKYLFVKDPLGYNNLIIQLGIRPGKSLVN.

Belongs to the universal ribosomal protein uS15 family. In terms of assembly, part of the 30S ribosomal subunit.

Its subcellular location is the plastid. The protein resides in the chloroplast. This Mesostigma viride (Green alga) protein is Small ribosomal subunit protein uS15c (rps15).